Consider the following 384-residue polypeptide: GTPase Obg (384 aa).

The region spanning 1–159 is the Obg domain; the sequence is MKFVDEVEIR…RPLKLELMLL (159 aa). Residues 72-94 form a disordered region; that stretch reads NGMGKNCTGRRGNDIVLPVPPGT. The OBG-type G domain occupies 160–333; the sequence is ADVGLLGMPN…LCREVMSYLE (174 aa). GTP-binding positions include 166–173, 191–195, 213–216, 283–286, and 314–316; these read GMPNAGKS, FTTLI, DIPG, NKVD, and AAL. Residues S173 and T193 each coordinate Mg(2+). A disordered region spans residues 358–384; that stretch reads EEVLEEEMDDEDDDDDDDHDVEVIYQK. Acidic residues predominate over residues 360-377; that stretch reads VLEEEMDDEDDDDDDDHD.

This sequence belongs to the TRAFAC class OBG-HflX-like GTPase superfamily. OBG GTPase family. In terms of assembly, monomer. Mg(2+) is required as a cofactor.

It localises to the cytoplasm. In terms of biological role, an essential GTPase which binds GTP, GDP and possibly (p)ppGpp with moderate affinity, with high nucleotide exchange rates and a fairly low GTP hydrolysis rate. Plays a role in control of the cell cycle, stress response, ribosome biogenesis and in those bacteria that undergo differentiation, in morphogenesis control. The polypeptide is GTPase Obg (Idiomarina loihiensis (strain ATCC BAA-735 / DSM 15497 / L2-TR)).